The chain runs to 1199 residues: Metabotropic glutamate receptor 1 (1199 aa).

An N-terminal signal peptide occupies residues 1–18 (MVRLLLIFFPMIFLEMSI). Residues 19–592 (LPRMPDRKVL…VRYLEWSDIE (574 aa)) are Extracellular-facing. Cysteines 67 and 109 form a disulfide. L-glutamate is bound at residue Y74. A glycan (N-linked (GlcNAc...) asparagine) is linked at N98. L-glutamate is bound by residues S165 and 186-188 (SAT). N223 carries N-linked (GlcNAc...) asparagine glycosylation. Y236 provides a ligand contact to L-glutamate. C289 and C291 are joined by a disulfide. D318 serves as a coordination point for L-glutamate. C378 and C394 form a disulfide bridge. A glycan (N-linked (GlcNAc...) asparagine) is linked at N397. K409 lines the L-glutamate pocket. Residues C432 and C439 are joined by a disulfide bond. N515 is a glycosylation site (N-linked (GlcNAc...) asparagine). The chain crosses the membrane as a helical span at residues 593–615 (SIIAIAFSCLGILVTLFVTLIFV). The Cytoplasmic portion of the chain corresponds to 616–629 (LYRDTPVVKSSSRE). Residues 630-650 (LCYIILAGIFLGYVCPFTLIA) traverse the membrane as a helical segment. The Extracellular segment spans residues 651–658 (KPTTTSCY). A disulfide bridge links C657 with C746. The chain crosses the membrane as a helical span at residues 659–680 (LQRLLVGLSSAMCYSALVTKTN). Topologically, residues 681-703 (RIARILAGSKKKICTRKPRFMSA) are cytoplasmic. Residues 704–727 (WAQVIIASILISVQLTLVVTLIIM) form a helical membrane-spanning segment. At 728-750 (EPPMPILSYPSIKEVYLICNTSN) the chain is on the extracellular side. A helical transmembrane segment spans residues 751–772 (LGVVAPVGYNGLLIMSCTYYAF). At 773 to 785 (KTRNVPANFNEAK) the chain is on the cytoplasmic side. Residues 786 to 807 (YIAFTMYTTCIIWLAFVPIYFG) traverse the membrane as a helical segment. At 808 to 815 (SNYKIITT) the chain is on the extracellular side. A helical transmembrane segment spans residues 816-840 (CFAVSLSVTVALGCMFTPKMYIIIA). Topologically, residues 841–1199 (KPERNVRSAF…RDYKQSSSTL (359 aa)) are cytoplasmic. The residue at position 853 (S853) is a Phosphoserine. T871 is modified (phosphothreonine). 3 disordered regions span residues 882 to 905 (GAGN…QAPK), 959 to 1036 (EEDN…QPKS), and 1056 to 1081 (HAVL…PPQH). Positions 885-895 (NANSNGKSVSW) are enriched in polar residues. A phosphoserine mark is found at S894 and S969. Pro residues predominate over residues 1012–1033 (GLPPPLPQQQPQQPPPQQPPQQ). Position 1098 is a phosphoserine (S1098). The interval 1120–1177 (EREGNTEEDELEEEEDLPTASKLTPEDSPALTPPSPFRDSVASGSSVPSSPVSESVLC) is disordered. Positions 1125-1136 (TEEDELEEEEDL) are enriched in acidic residues. At S1147 the chain carries Phosphoserine. T1151 is subject to Phosphothreonine. S1154 carries the phosphoserine modification. Over residues 1159–1175 (SVASGSSVPSSPVSESV) the composition is skewed to low complexity.

It belongs to the G-protein coupled receptor 3 family. As to quaternary structure, homodimer; disulfide-linked. The PPXXF motif binds HOMER1, HOMER2 and HOMER3. Interacts with TAMALIN. Interacts with RYR1, RYR2, ITPR1, SHANK1 and SHANK3. Interacts with SIAH1. Predominantly expressed in cerebellar Purkinje cells, CA2-CA3 pyramidal cells of the hippocampus, and mitral and tufted cells of the olfactory bulb.

It localises to the cell membrane. Its subcellular location is the postsynaptic cell membrane. It is found in the cell projection. The protein resides in the dendrite. Its function is as follows. G-protein coupled receptor for glutamate. Ligand binding causes a conformation change that triggers signaling via guanine nucleotide-binding proteins (G proteins) and modulates the activity of down-stream effectors. Signaling activates a phosphatidylinositol-calcium second messenger system. May participate in the central action of glutamate in the CNS, such as long-term potentiation in the hippocampus and long-term depression in the cerebellum. May function in the light response in the retina. Induces GRID1 and GRID2 cation-channel activation via GNAQ-PLC-PKC pathway in dopaminergic neurons and cerebellar Purkinje cell, respectively. This chain is Metabotropic glutamate receptor 1 (Grm1), found in Rattus norvegicus (Rat).